The chain runs to 370 residues: MQVYMLLPLAVFASLTYQGACEETAAAQTSSDASTSSASSEHAENELSRAKRGSYRMMRLGRGLHMLRLGKRGGPVEPESEENLETLLNLLQGYYSDVPEYPSEFDDTDLAYPYEEYDAPAHPRYRRSTPPTDGVVAPDVLQKGSSEFEDFGDSQLDESDEGYYGYDPENYLYGDFEDYLEPEEGGLGEEKRSLSMLRLGKRGLSMLRLGKREGEEGDEMDKKQDESLNDDFENDDIKRTLSMLRLGKRPMSMLRLGKRPMSMLRLGKRPMSMLRLGKRPMSMLRLGKRPMSMLRLGKRPMSMLRLGKRPMSMLRLGKRPMSMLRLGKRPMSMLRLGKRPMSMLRLGKRDDDEKEKKSLNMSRLGKRSTQ.

Residues 1-18 (MQVYMLLPLAVFASLTYQ) form the signal peptide. A propeptide spanning residues 19–50 (GACEETAAAQTSSDASTSSASSEHAENELSRA) is cleaved from the precursor. Over residues 28–40 (QTSSDASTSSASS) the composition is skewed to low complexity. The interval 28-52 (QTSSDASTSSASSEHAENELSRAKR) is disordered. Leu-60 and Leu-69 each carry leucine amide. Residues 73–190 (GGPVEPESEE…EPEEGGLGEE (118 aa)) constitute a propeptide that is removed on maturation. 2 positions are modified to leucine amide: Leu-199 and Leu-209. Residues 210–226 (GKREGEEGDEMDKKQDE) are compositionally biased toward basic and acidic residues. Residues 210–230 (GKREGEEGDEMDKKQDESLND) form a disordered region. A propeptide spanning residues 213–237 (EGEEGDEMDKKQDESLNDDFENDDI) is cleaved from the precursor. 11 positions are modified to leucine amide: Leu-246, Leu-256, Leu-266, Leu-276, Leu-286, Leu-296, Leu-306, Leu-316, Leu-326, Leu-336, and Leu-346. The disordered stretch occupies residues 344 to 370 (LRLGKRDDDEKEKKSLNMSRLGKRSTQ). A compositionally biased stretch (basic and acidic residues) spans 347–358 (GKRDDDEKEKKS). A propeptide spanning residues 350 to 355 (DDDEKE) is cleaved from the precursor. Leu-364 carries the post-translational modification Leucine amide. A propeptide spanning residues 368–370 (STQ) is cleaved from the precursor.

In terms of tissue distribution, expressed in all ganglia of the CNS, but only in a subset of neurons including L10 in the abdominal ganglion and B16 in the buccal ganglion.

The protein localises to the secreted. Functionally, exogenous application of myomodulins potentiates ARC muscle contraction. This chain is Myomodulin neuropeptides 1 (MYOMOD1), found in Aplysia californica (California sea hare).